The primary structure comprises 640 residues: MPEQDLASGFLLRFQNARPVCLSVGSFVSFRTVQPRKMRDRGWRCVWHRMAGVGALFGIFGVLCTVEAGATVAAPQVETGPLLSVRAPRSPLHLRDVDAPEVTHASSEGSPQFESSLSQQRLRRPADRGEAHNGEEPRKDAATQTVRGYGGQSTEPPPASIVPVSSEAPQDGAEQRQASSAAESLAGLDPDAGDTGLRSQEMDEEGSGAAQDMERAHAAQPTVSTWDDAHLVQVSTSHPDMFPVDGSFSKKQEGRRERRLAVRGDDSFARGHNRDRDASNGRSILRRAPGWAKIAALATGLLVSAFGYSSYKHGGPRVALRIHKLHLKRKLPISWRRYLNNLPVLDERLFPEFEDILPWLRRGARLVKRVPHVSEALADFIGLDEETRRTGIVIKVKSSTDAEARRLVYEVNAHANMVPDNPFFLPIIGAYQGASKRAVYMILPRARADVADYVRARPYDVDVRLAAAEMVYSNYILHTHGFLHRDIKAHNYFVTFDGHVVLADFEGVGVLQQRTPVVGTRGYFAPELSRATDHTEKSDVFALGQTLKRLVKYMRPTVRVPHLRELWALTKRMTAKDPEERPTLKQVMEDPYFDGIDFERLEAKDQGVPFRGDFSIDDPDAGGKMYIPPSKEQDHEQENE.

The N-terminal stretch at 1–70 (MPEQDLASGF…GVLCTVEAGA (70 aa)) is a signal peptide. Disordered regions lie at residues 100-222 (PEVT…AQPT) and 237-280 (SHPD…DASN). Polar residues predominate over residues 104–120 (HASSEGSPQFESSLSQQ). Residues 124 to 141 (RPADRGEAHNGEEPRKDA) show a composition bias toward basic and acidic residues. Over residues 175–186 (QRQASSAAESLA) the composition is skewed to low complexity. Positions 248 to 279 (FSKKQEGRRERRLAVRGDDSFARGHNRDRDAS) are enriched in basic and acidic residues. A Protein kinase domain is found at 291–593 (WAKIAALATG…LKQVMEDPYF (303 aa)). Residue K395 coordinates ATP. Catalysis depends on D486, which acts as the Proton acceptor. The segment at 609–640 (PFRGDFSIDDPDAGGKMYIPPSKEQDHEQENE) is disordered. The segment covering 631 to 640 (KEQDHEQENE) has biased composition (basic and acidic residues).

The protein belongs to the protein kinase superfamily. STE Ser/Thr protein kinase family. WNG subfamily. The cofactor is Mg(2+).

It localises to the cytoplasmic granule. It is found in the secreted. The protein resides in the parasitophorous vacuole lumen. It catalyses the reaction L-seryl-[protein] + ATP = O-phospho-L-seryl-[protein] + ADP + H(+). It carries out the reaction L-threonyl-[protein] + ATP = O-phospho-L-threonyl-[protein] + ADP + H(+). In terms of biological role, serine/threonine-protein kinase which, at the tachyzoite stage, phosphorylates several parasitophorous vacuole (PV)-resident proteins such as GRA2, GRA6 and GRA7. By phosphorylating GRA2 and GRA6, regulates the formation of a functional intravacuolar network (IVN); IVN is composed of membranous tubules that bud from the PV membrane into the vacuolar lumen. Plays a role in the establishement of chronic infection in the host by controlling cyst formation in the host tissues. The sequence is that of Serine/threonine-protein kinase WNG1 from Toxoplasma gondii.